We begin with the raw amino-acid sequence, 293 residues long: Small ribosomal subunit protein uS2 (293 aa).

The disordered stretch occupies residues 239 to 293 (PAGGADWEAAPAGFPAAATGEWSEAQPATWESGAAAATGPSTEWADSAPKDTAGW). Low complexity predominate over residues 247 to 256 (AAPAGFPAAA).

The protein belongs to the universal ribosomal protein uS2 family. As to quaternary structure, component of the small ribosomal subunit. Mature ribosomes consist of a small (40S) and a large (60S) subunit. The 40S subunit contains about 33 different proteins and 1 molecule of RNA (18S). The 60S subunit contains about 49 different proteins and 3 molecules of RNA (25S, 5.8S and 5S). Interacts with RPS21.

The protein resides in the cytoplasm. In terms of biological role, required for the assembly and/or stability of the 40S ribosomal subunit. Required for the processing of the 20S rRNA-precursor to mature 18S rRNA in a late step of the maturation of 40S ribosomal subunits. The sequence is that of Small ribosomal subunit protein uS2 from Chaetomium globosum (strain ATCC 6205 / CBS 148.51 / DSM 1962 / NBRC 6347 / NRRL 1970) (Soil fungus).